A 200-amino-acid polypeptide reads, in one-letter code: uncharacterized protein (200 aa).

A disordered region spans residues 1–21 (MSNSAQRDARNSRDESARASD). The span at 7-21 (RDARNSRDESARASD) shows a compositional bias: basic and acidic residues.

This is an uncharacterized protein from Mycobacterium tuberculosis (strain ATCC 25618 / H37Rv).